Here is a 356-residue protein sequence, read N- to C-terminus: Peritrophin-44 (356 aa).

The N-terminal stretch at 1–23 (MKELQITTGCLLLMVAAIGKTSA) is a signal peptide. Chitin-binding type-2 domains lie at 28-85 (SETC…KCIS), 88-146 (KNAC…ECTA), 147-201 (DSIC…PCLA), 220-283 (NFVC…PCTF), and 286-355 (CGNL…YKLC). An intrachain disulfide couples cysteine 62 to cysteine 75. An N-linked (GlcNAc...) asparagine glycan is attached at asparagine 114. 3 disulfide bridges follow: cysteine 122–cysteine 135, cysteine 181–cysteine 193, and cysteine 262–cysteine 273. A glycan (N-linked (GlcNAc...) asparagine) is linked at asparagine 309.

Post-translationally, glycosylated. As to expression, larval peritrophic membrane.

May have roles in the maintenance of peritrophic membrane structure and in the determination of the porosity of the peritrophic membrane. May bind chitin or related oligosaccharide structures. In Lucilia cuprina (Green bottle fly), this protein is Peritrophin-44.